The sequence spans 60 residues: Small ribosomal subunit protein eS31 (60 aa).

Cysteine 27, cysteine 30, cysteine 45, and cysteine 48 together coordinate Zn(2+). The C4-type zinc-finger motif lies at 27 to 48 (CPRCGPGVFMAEHLNRYACGKC).

This sequence belongs to the eukaryotic ribosomal protein eS31 family. As to quaternary structure, part of the 30S ribosomal subunit. The cofactor is Zn(2+).

In Methanocaldococcus jannaschii (strain ATCC 43067 / DSM 2661 / JAL-1 / JCM 10045 / NBRC 100440) (Methanococcus jannaschii), this protein is Small ribosomal subunit protein eS31.